Here is a 271-residue protein sequence, read N- to C-terminus: (21S)-21-acetoxyl-apo-melianone synthase SDR (271 aa).

The active-site Proton donor is the Ser-150. Residue Tyr-163 is the Proton acceptor of the active site. The active-site Proton donor/acceptor is Lys-167.

The protein belongs to the short-chain dehydrogenases/reductases (SDR) family. As to expression, mainly expressed in petioles.

The enzyme catalyses 21-O-acetyl-isomeliandiol + A = (21S)-21-acetoxyl-apo-melianone + AH2. It functions in the pathway secondary metabolite biosynthesis; terpenoid biosynthesis. Functionally, oxidoreductase involved in the biosynthesis of limonoids triterpene natural products such as azadirachtin, an antifeedant widely used as bioinsecticide, and possessing many medicinal applications including anti-tumoral, anti-malarial, anti-rheumatic, antibacterial, anti-inflammatory, anti-pyretic and diuretic effects. Catalyzes the oxidation of 21-O-acetyl-isomeliandiol to (21S)-21-acetoxyl-apo-melianone. This is (21S)-21-acetoxyl-apo-melianone synthase SDR from Melia azedarach (Chinaberry tree).